The sequence spans 578 residues: Longifolene synthase (578 aa).

Asp331, Asp335, and Asp475 together coordinate Mg(2+). The DDXXD motif motif lies at 331–335 (DDLYD).

The protein belongs to the terpene synthase family. Tpsd subfamily. Mg(2+) is required as a cofactor. Requires Mn(2+) as cofactor.

Its subcellular location is the cytoplasm. The catalysed reaction is (2E,6E)-farnesyl diphosphate = longifolene + diphosphate. It functions in the pathway sesquiterpene biosynthesis. Its pathway is terpene metabolism; oleoresin biosynthesis. Its function is as follows. Involved in defensive oleoresin formation in conifers in response to insect attack or other injury. Involved in sesquiterpene (C15) olefins biosynthesis. Produces mainly longifolene, but also multiple minor products including alpha-longipinene, alpha-longicyclene, E-beta-farnesene, longiborneol, cyclosativene, beta-longipinene, and 12 other sesquiterpenes when used with farnesyl diphosphate (FPP) as substrate. The protein is Longifolene synthase (TPS-Lon) of Picea abies (Norway spruce).